The sequence spans 247 residues: Dof zinc finger protein DOF3.5 (247 aa).

The segment at 25–79 adopts a Dof-type zinc-finger fold; it reads PSCPRCGSSNTKFCYYNNYSLTQPRYFCKGCRRYWTKGGSLRNVPVGGGCRKSRR. Positions 27, 30, 52, and 55 each coordinate Zn(2+). Residues 70-100 form a disordered region; sequence VGGGCRKSRRPKSSSGNNTKTSLTANSGNPG. Over residues 82–94 the composition is skewed to polar residues; sequence SSSGNNTKTSLTA.

The protein localises to the nucleus. Functionally, transcription factor that binds specifically to a 5'-AA[AG]G-3' consensus core sequence. The polypeptide is Dof zinc finger protein DOF3.5 (DOF3.5) (Arabidopsis thaliana (Mouse-ear cress)).